The primary structure comprises 201 residues: UPF0637 protein LCA_0842 (201 aa).

This sequence belongs to the UPF0637 family.

The polypeptide is UPF0637 protein LCA_0842 (Latilactobacillus sakei subsp. sakei (strain 23K) (Lactobacillus sakei subsp. sakei)).